The following is a 493-amino-acid chain: Ketol-acid reductoisomerase (NADP(+)) (493 aa).

The region spanning 15–208 (AQLGKCRFMQ…GGDRAGVLES (194 aa)) is the KARI N-terminal Rossmann domain. NADP(+)-binding positions include 45 to 48 (CGAQ), arginine 68, arginine 76, serine 78, and 108 to 110 (DKQ). Residue histidine 132 is part of the active site. Residue glycine 158 participates in NADP(+) binding. KARI C-terminal knotted domains lie at 209 to 344 (SFVA…NAPA) and 345 to 486 (FAGK…MKDM). Aspartate 217, glutamate 221, glutamate 389, and glutamate 393 together coordinate Mg(2+). Serine 414 contacts substrate.

Belongs to the ketol-acid reductoisomerase family. Mg(2+) serves as cofactor.

It catalyses the reaction (2R)-2,3-dihydroxy-3-methylbutanoate + NADP(+) = (2S)-2-acetolactate + NADPH + H(+). It carries out the reaction (2R,3R)-2,3-dihydroxy-3-methylpentanoate + NADP(+) = (S)-2-ethyl-2-hydroxy-3-oxobutanoate + NADPH + H(+). The protein operates within amino-acid biosynthesis; L-isoleucine biosynthesis; L-isoleucine from 2-oxobutanoate: step 2/4. It participates in amino-acid biosynthesis; L-valine biosynthesis; L-valine from pyruvate: step 2/4. Its function is as follows. Involved in the biosynthesis of branched-chain amino acids (BCAA). Catalyzes an alkyl-migration followed by a ketol-acid reduction of (S)-2-acetolactate (S2AL) to yield (R)-2,3-dihydroxy-isovalerate. In the isomerase reaction, S2AL is rearranged via a Mg-dependent methyl migration to produce 3-hydroxy-3-methyl-2-ketobutyrate (HMKB). In the reductase reaction, this 2-ketoacid undergoes a metal-dependent reduction by NADPH to yield (R)-2,3-dihydroxy-isovalerate. The sequence is that of Ketol-acid reductoisomerase (NADP(+)) from Aeromonas hydrophila subsp. hydrophila (strain ATCC 7966 / DSM 30187 / BCRC 13018 / CCUG 14551 / JCM 1027 / KCTC 2358 / NCIMB 9240 / NCTC 8049).